The following is a 1366-amino-acid chain: Protein strawberry notch homolog 2 (1366 aa).

Disordered stretches follow at residues 1–24, 174–217, 614–640, and 1324–1366; these read MLAV…GSLL, QEQS…KQHP, STKR…KAPR, and HAGP…QAPL. Positions 15–24 are enriched in pro residues; it reads HEPPPAGSLL. Residues 182 to 194 show a composition bias toward acidic residues; it reads PEEEDEAEEEEAE. Basic residues predominate over residues 614-637; it reads STKRKRDRGAGSKRKRRPRGRGAK. Gly residues predominate over residues 1333 to 1347; sequence LGEGAGAGGAAGGGP.

It belongs to the SBNO family. Interacts with TAL1; this interaction inhibits TAL1 occupancy of the DCSTAMP promoter, leading to the activation of the DCSTAMP promoter by the transcription factor MITF. Detected in macrophages. IL10 regulates expression in a STAT3-dependent way.

Functionally, acts as a transcriptional coregulator, that can have both coactivator and corepressor functions. Inhibits the DCSTAMP-repressive activity of TAL1, hence enhancing the access of the transcription factor MITF to the DC-STAMP promoter in osteoclast. Plays a role in bone homeostasis; required as a positive regulator in TNFSF11//RANKL-mediated osteoclast fusion via a DCSTAMP-dependent pathway. May also be required in the regulation of osteoblast differentiation. Involved in the transcriptional corepression of NF-kappaB in macrophages. Plays a role as a regulator in the pro-inflammatory cascade. The protein is Protein strawberry notch homolog 2 (SBNO2) of Homo sapiens (Human).